We begin with the raw amino-acid sequence, 131 residues long: uncharacterized protein (131 aa).

The next 2 membrane-spanning stretches (helical) occupy residues 52–72 (LIMI…FYLV) and 97–117 (SDII…YDVG).

The protein localises to the membrane. This is an uncharacterized protein from Acanthamoeba polyphaga mimivirus (APMV).